Reading from the N-terminus, the 54-residue chain is UPF0391 membrane protein Mpe_A2904 (54 aa).

The next 2 helical transmembrane spans lie at alanine 5–alanine 25 and isoleucine 30–leucine 50.

It belongs to the UPF0391 family.

It is found in the cell membrane. The sequence is that of UPF0391 membrane protein Mpe_A2904 from Methylibium petroleiphilum (strain ATCC BAA-1232 / LMG 22953 / PM1).